We begin with the raw amino-acid sequence, 154 residues long: Ribonuclease H (154 aa).

Residues 1–142 (MKQVDIFTDG…CDTIARGHAS (142 aa)) enclose the RNase H type-1 domain. The Mg(2+) site is built by aspartate 9, glutamate 47, aspartate 69, and aspartate 134.

This sequence belongs to the RNase H family. In terms of assembly, monomer. The cofactor is Mg(2+).

It localises to the cytoplasm. It carries out the reaction Endonucleolytic cleavage to 5'-phosphomonoester.. Endonuclease that specifically degrades the RNA of RNA-DNA hybrids. The polypeptide is Ribonuclease H (Oleidesulfovibrio alaskensis (strain ATCC BAA-1058 / DSM 17464 / G20) (Desulfovibrio alaskensis)).